A 106-amino-acid chain; its full sequence is MNDDILQAVYRVILERKANPSEQSYTASLMAKGIDKILKKLGEEATEVVIAGKGGAREEIIYETADLFFHTLVLLGYCDINPDEIYDELRRRFGMSGIAEKESRDR.

It belongs to the PRA-PH family.

The protein localises to the cytoplasm. It catalyses the reaction 1-(5-phospho-beta-D-ribosyl)-ATP + H2O = 1-(5-phospho-beta-D-ribosyl)-5'-AMP + diphosphate + H(+). Its pathway is amino-acid biosynthesis; L-histidine biosynthesis; L-histidine from 5-phospho-alpha-D-ribose 1-diphosphate: step 2/9. The protein is Phosphoribosyl-ATP pyrophosphatase of Geotalea daltonii (strain DSM 22248 / JCM 15807 / FRC-32) (Geobacter daltonii).